A 721-amino-acid chain; its full sequence is MLLPVFTLKLRHKISPRMVAIGRYDGTHPCLAAATQAGKVFIHNPHTRSQHFSASRVFQSPLESDVSLLNINQTVSCLGSGVLNPELGYDTLLVGTQTSLLAYDIYNNSDLFYREVSDGANAIVLGTLGDIAPPLAIIGGNCALQGFDHEGNDLFWTVTGDNVHSLALCDFDGDGKTELLVGSEDFDIRVFKEDEIVAEMTETEIVTSLCPMYGSRFGYALSNGTVGVYDKTARYWRIKSKNHAMSIHAFDINSDGVCELITGWSNGKVDARSDRTGEVIFKDNFSSAVAGVVEGDYRMDGHVQLICCSVDGEIRGYLPGTAEMKGNLLDTSVEQDLIRELSQKKQNLLLELRNYEESTKAELSSPLNEADGQKGIIPANTRLHTALSVNMGNDLQDAHAELGISTSNDTIIRAVLIFAEGIFVGESHVVHPSIHNLSSSLRVPITPPKDVPVDLHLKTFVGYRSSTQFHVFELTRQLPRFTMYALTSPDAASEPVSYVNFSVAERTQRMVTWLNQNFLLPEDSNVQNSPFHVCFTSLRNGGQLYIKMKQSGEITVNTDDIDLAGDIIQSIASFFAIEDLQVEADFPVYFEELRKVLVKVDEYHSVHQKLSADMADNSNLIRSLLVRAEDARLMRDMKTMKSRYMELYDLNKDLLNGYKIRCNNHTELLGNLKAVNQAIQRAGRLRVGKPKNQVISACRDAIRSNNINTLFRIMRVGTAPS.

Residues 325–369 (KGNLLDTSVEQDLIRELSQKKQNLLLELRNYEESTKAELSSPLNE) adopt a coiled-coil conformation.

Part of BBSome complex, that contains BBS1, BBS2, BBS4, BBS5, BBS7, BBS8/TTC8, BBS9 and BBIP10. Interacts (via C-terminus) with BBS7. Interacts (via coiled coil domain) with MKKS. Interacts with CCDC28B. Interacts with DLEC1.

It localises to the cell projection. Its subcellular location is the cilium membrane. The protein localises to the cytoplasm. The protein resides in the cytoskeleton. It is found in the microtubule organizing center. It localises to the centrosome. Its subcellular location is the centriolar satellite. Functionally, the BBSome complex is thought to function as a coat complex required for sorting of specific membrane proteins to the primary cilia. The BBSome complex is required for ciliogenesis but is dispensable for centriolar satellite function. This ciliogenic function is mediated in part by the Rab8 GDP/GTP exchange factor, which localizes to the basal body and contacts the BBSome. Rab8(GTP) enters the primary cilium and promotes extension of the ciliary membrane. Firstly the BBSome associates with the ciliary membrane and binds to RAB3IP/Rabin8, the guanosyl exchange factor (GEF) for Rab8 and then the Rab8-GTP localizes to the cilium and promotes docking and fusion of carrier vesicles to the base of the ciliary membrane. The BBSome complex, together with the LTZL1, controls SMO ciliary trafficking and contributes to the sonic hedgehog (SHH) pathway regulation. Required for proper BBSome complex assembly and its ciliary localization. This is BBSome complex member BBS2 (Bbs2) from Mus musculus (Mouse).